The chain runs to 407 residues: GTPase Obg (407 aa).

The 159-residue stretch at 1–159 (MKFVDEVSIR…RDLKMEMKVL (159 aa)) folds into the Obg domain. The tract at residues 127–150 (NTRFKSSTNRAPRQTTPGKPGDQR) is disordered. Positions 129-143 (RFKSSTNRAPRQTTP) are enriched in polar residues. Residues 160-333 (ADVGLLGLPN…LSHDLMRYLE (174 aa)) enclose the OBG-type G domain. GTP-binding positions include 166 to 173 (GLPNAGKS), 191 to 195 (FTTLV), 213 to 216 (DIPG), 283 to 286 (NKAD), and 314 to 316 (SAI). Residues S173 and T193 each coordinate Mg(2+). The tract at residues 378–407 (VKSVHDIGDDDDWDDFEDDEDGPEIIYVRD) is disordered. Over residues 385–400 (GDDDDWDDFEDDEDGP) the composition is skewed to acidic residues.

Belongs to the TRAFAC class OBG-HflX-like GTPase superfamily. OBG GTPase family. As to quaternary structure, monomer. Mg(2+) serves as cofactor.

The protein localises to the cytoplasm. Functionally, an essential GTPase which binds GTP, GDP and possibly (p)ppGpp with moderate affinity, with high nucleotide exchange rates and a fairly low GTP hydrolysis rate. Plays a role in control of the cell cycle, stress response, ribosome biogenesis and in those bacteria that undergo differentiation, in morphogenesis control. This chain is GTPase Obg, found in Pseudomonas entomophila (strain L48).